Consider the following 206-residue polypeptide: Small ribosomal subunit protein uS4 (206 aa).

In terms of domain architecture, S4 RNA-binding spans 96–156 (GRLDNVVYRM…EKSKKQARIK (61 aa)).

It belongs to the universal ribosomal protein uS4 family. As to quaternary structure, part of the 30S ribosomal subunit. Contacts protein S5. The interaction surface between S4 and S5 is involved in control of translational fidelity.

Its function is as follows. One of the primary rRNA binding proteins, it binds directly to 16S rRNA where it nucleates assembly of the body of the 30S subunit. In terms of biological role, with S5 and S12 plays an important role in translational accuracy. The chain is Small ribosomal subunit protein uS4 from Mannheimia succiniciproducens (strain KCTC 0769BP / MBEL55E).